A 435-amino-acid polypeptide reads, in one-letter code: Probable xyloglucan galactosyltransferase GT19 (435 aa).

Residues 1-6 (MASKST) lie on the Cytoplasmic side of the membrane. A helical; Signal-anchor for type II membrane protein transmembrane segment spans residues 7 to 23 (VTTLTIFFFFFFFFIEP). Over 24–435 (KVQSQQISAV…GVLDRIISRV (412 aa)) the chain is Lumenal. 3 N-linked (GlcNAc...) asparagine glycosylation sites follow: N140, N203, and N277.

Belongs to the glycosyltransferase 47 family. In terms of tissue distribution, expressed in roots, hypocotyls, cotyledons, leaves, stems, stamens and pollen grains.

The protein localises to the golgi apparatus membrane. In terms of biological role, functions in xyloglucan synthesis by adding side chains to the xylosylated glucan backbone. Involved in the galactosylation of hemicellulose xyloglucan. The polypeptide is Probable xyloglucan galactosyltransferase GT19 (Arabidopsis thaliana (Mouse-ear cress)).